The sequence spans 219 residues: Guanylate kinase (219 aa).

One can recognise a Guanylate kinase-like domain in the interval 15-194 (GLMFVLSSPS…AFAEVQSILK (180 aa)). Position 22-29 (22-29 (SPSGAGKT)) interacts with ATP.

The protein belongs to the guanylate kinase family.

The protein resides in the cytoplasm. It catalyses the reaction GMP + ATP = GDP + ADP. Functionally, essential for recycling GMP and indirectly, cGMP. The sequence is that of Guanylate kinase from Nitrobacter hamburgensis (strain DSM 10229 / NCIMB 13809 / X14).